Here is a 275-residue protein sequence, read N- to C-terminus: Glutamate racemase (275 aa).

Substrate is bound by residues D10–S11 and Y42–G43. The active-site Proton donor/acceptor is the C74. Position 75 to 76 (N75 to T76) interacts with substrate. C189 (proton donor/acceptor) is an active-site residue. T190–H191 lines the substrate pocket.

This sequence belongs to the aspartate/glutamate racemases family.

The enzyme catalyses L-glutamate = D-glutamate. It functions in the pathway cell wall biogenesis; peptidoglycan biosynthesis. In terms of biological role, provides the (R)-glutamate required for cell wall biosynthesis. This Bartonella tribocorum (strain CIP 105476 / IBS 506) protein is Glutamate racemase.